Here is a 375-residue protein sequence, read N- to C-terminus: Erythronate-4-phosphate dehydrogenase (375 aa).

Residue S49 participates in substrate binding. NAD(+)-binding residues include D150 and T178. Residue R211 is part of the active site. NAD(+) is bound at residue D231. The active site involves E236. H253 serves as the catalytic Proton donor. NAD(+) is bound at residue G256.

It belongs to the D-isomer specific 2-hydroxyacid dehydrogenase family. PdxB subfamily. As to quaternary structure, homodimer.

It localises to the cytoplasm. The enzyme catalyses 4-phospho-D-erythronate + NAD(+) = (R)-3-hydroxy-2-oxo-4-phosphooxybutanoate + NADH + H(+). It participates in cofactor biosynthesis; pyridoxine 5'-phosphate biosynthesis; pyridoxine 5'-phosphate from D-erythrose 4-phosphate: step 2/5. In terms of biological role, catalyzes the oxidation of erythronate-4-phosphate to 3-hydroxy-2-oxo-4-phosphonooxybutanoate. The sequence is that of Erythronate-4-phosphate dehydrogenase from Hydrogenovibrio crunogenus (strain DSM 25203 / XCL-2) (Thiomicrospira crunogena).